A 656-amino-acid chain; its full sequence is Pentatricopeptide repeat-containing protein At1g62260, mitochondrial (656 aa).

PPR repeat units lie at residues 70 to 104 (NTVT…DVVT), 105 to 134 (WNTM…MPSR), 135 to 169 (DSFS…NAVS), 170 to 200 (WSAM…DSSP), 203 to 227 (ALVA…YGSL), 234 to 264 (LVYA…IPDL), 280 to 310 (NVVS…MKDR), 311 to 345 (DTIS…DAHS), 346 to 372 (WNMM…TPEK), 373 to 407 (HTVS…GEKP), 408 to 438 (DPHT…VVKT), 442 to 472 (DVPV…MKLK), 474 to 508 (EVIT…GIYP), 509 to 544 (SHIT…KIEP), and 545 to 575 (QMEH…MPFE). The tract at residues 580–655 (VWGALLDACR…ERGSSWVDSS (76 aa)) is type E motif.

It belongs to the PPR family. PCMP-E subfamily.

Its subcellular location is the mitochondrion. This Arabidopsis thaliana (Mouse-ear cress) protein is Pentatricopeptide repeat-containing protein At1g62260, mitochondrial (PCMP-E10).